We begin with the raw amino-acid sequence, 153 residues long: Troponin C (153 aa).

Blocked amino end (Ala) is present on Ala1. 4 consecutive EF-hand domains span residues 10 to 45 (EQVQ…LGQT), 46 to 81 (FEEK…FLVE), 86 to 121 (AMQE…LDDK), and 122 to 153 (LTED…MMTG). Ca(2+)-binding residues include Asp59, Asp61, Ser63, Glu65, Glu70, Asp99, Asp110, Asp135, Asp137, Ser139, Thr141, and Glu146.

This sequence belongs to the troponin C family.

Troponin is the central regulatory protein of striated muscle contraction. Tn consists of three components: Tn-I which is the inhibitor of actomyosin ATPase, Tn-T which contains the binding site for tropomyosin and Tn-C. The binding of calcium to Tn-C abolishes the inhibitory action of Tn on actin filaments. This is Troponin C from Tachypleus tridentatus (Japanese horseshoe crab).